A 384-amino-acid chain; its full sequence is Mitogen-activated protein kinase homolog 1 (384 aa).

The region spanning 32–319 (YVPIKPIGRG…VMEALQHPYM (288 aa)) is the Protein kinase domain. ATP-binding positions include 38–46 (IGRGAYGIV) and lysine 61. Aspartate 158 acts as the Proton acceptor in catalysis. Threonine 191 is subject to Phosphothreonine. Residues 191–193 (TEY) carry the TXY motif. Tyrosine 193 carries the phosphotyrosine modification.

The protein belongs to the protein kinase superfamily. CMGC Ser/Thr protein kinase family. MAP kinase subfamily. The cofactor is Mg(2+). In terms of processing, dually phosphorylated on Thr-191 and Tyr-193, which activates the enzyme. In terms of tissue distribution, expressed in vegetative organs such as leaf, root, or stem. In the reproductive organs, it is found in the ovary, but not in the stamen.

It carries out the reaction L-seryl-[protein] + ATP = O-phospho-L-seryl-[protein] + ADP + H(+). It catalyses the reaction L-threonyl-[protein] + ATP = O-phospho-L-threonyl-[protein] + ADP + H(+). Activated by tyrosine and threonine phosphorylation. The polypeptide is Mitogen-activated protein kinase homolog 1 (MPK1) (Petunia hybrida (Petunia)).